A 94-amino-acid chain; its full sequence is PTS system galactitol-specific EIIB component (94 aa).

In terms of domain architecture, PTS EIIB type-2 spans 1–94 (MKRKIIVACG…QNKILTILQG (94 aa)). Cysteine 9 (phosphocysteine intermediate; for EIIB activity) is an active-site residue. Residue cysteine 9 is modified to Phosphocysteine; by EIIA.

As to quaternary structure, forms a complex with one each of subunit of GatA, GatB and 2 subunits of GatC.

Its subcellular location is the cytoplasm. It carries out the reaction galactitol(out) + N(pros)-phospho-L-histidyl-[protein] = galactitol 1-phosphate(in) + L-histidyl-[protein]. Functionally, the phosphoenolpyruvate-dependent sugar phosphotransferase system (PTS), a major carbohydrate active transport system, catalyzes the phosphorylation of incoming sugar substrates concomitant with their translocation across the cell membrane. The enzyme II complex composed of GatA, GatB and GatC is involved in galactitol transport. It can also use D-glucitol. The polypeptide is PTS system galactitol-specific EIIB component (Escherichia coli (strain K12)).